Reading from the N-terminus, the 119-residue chain is Holo-[acyl-carrier-protein] synthase (119 aa).

Mg(2+) contacts are provided by Asp-8 and Glu-58.

This sequence belongs to the P-Pant transferase superfamily. AcpS family. Mg(2+) is required as a cofactor.

The protein localises to the cytoplasm. It carries out the reaction apo-[ACP] + CoA = holo-[ACP] + adenosine 3',5'-bisphosphate + H(+). Functionally, transfers the 4'-phosphopantetheine moiety from coenzyme A to a Ser of acyl-carrier-protein. The sequence is that of Holo-[acyl-carrier-protein] synthase from Bacillus cereus (strain ZK / E33L).